Reading from the N-terminus, the 62-residue chain is MRLHHLLLLLLLVVLSSGSGFTQGVRSYLSCWGNRGICLLNRCPGRMRQIGTCLAPRVKCCR.

Positions 1 to 22 (MRLHHLLLLLLLVVLSSGSGFT) are cleaved as a signal peptide. Glutamine 23 is subject to Pyrrolidone carboxylic acid. Cystine bridges form between cysteine 31/cysteine 60, cysteine 38/cysteine 53, and cysteine 43/cysteine 61.

This sequence belongs to the beta-defensin family. Neutrophilic granules.

It localises to the secreted. In terms of biological role, has bactericidal activity. Active against E.coli ML35 and S.aureus 502A. The chain is Beta-defensin 10 (DEFB10) from Bos taurus (Bovine).